The following is a 243-amino-acid chain: Tubulin-folding cofactor B (243 aa).

The CAP-Gly domain occupies 181-223; the sequence is RAESLGPGYWVGIQYDEPLGKHDGMVKGTRFFECPRLQGGMVR.

It belongs to the TBCB family. As to quaternary structure, supercomplex made of cofactors A to E. Cofactors A and D function by capturing and stabilizing tubulin in a quasi-native conformation. Cofactor E binds to the cofactor D-tubulin complex; interaction with cofactor C then causes the release of tubulin polypeptides that are committed to the native state. Interacts with TUBA6. In terms of tissue distribution, expressed in roots, stems, leaves, flowers and siliques.

It localises to the cytoplasm. In terms of biological role, involved in control of cell division. Regulates probably the availability of alpha-tubulin for dimerization of alpha-/beta-tubulin, which is required for proper microtubule biogenesis. Decreased expression of TFCB results in enlarged mesophyll cells and leaf epidermal cells with bulged nuclei, increased ploidy and increased numbers of spindles and phragmoplasts. This Arabidopsis thaliana (Mouse-ear cress) protein is Tubulin-folding cofactor B (TFCB).